We begin with the raw amino-acid sequence, 206 residues long: uncharacterized protein (206 aa).

2 disordered regions span residues 64 to 123 (NTES…DPSL) and 155 to 206 (VTTP…SSGG). The segment covering 66-79 (ESTQKTATTQQQGL) has biased composition (polar residues). Residues 97-107 (AENNAQANQSE) are compositionally biased toward low complexity. A compositionally biased stretch (basic and acidic residues) spans 108-118 (NRAESTTKAES). Positions 155–167 (VTTPTGQVVQPQT) are enriched in low complexity. Residues 182-198 (GSMNSKPVSRGGFSSPN) are compositionally biased toward polar residues.

This is an uncharacterized protein from Haemophilus influenzae (strain ATCC 51907 / DSM 11121 / KW20 / Rd).